The chain runs to 89 residues: Small ribosomal subunit protein uS19 (89 aa).

It belongs to the universal ribosomal protein uS19 family.

Protein S19 forms a complex with S13 that binds strongly to the 16S ribosomal RNA. The polypeptide is Small ribosomal subunit protein uS19 (Porphyromonas gingivalis (strain ATCC 33277 / DSM 20709 / CIP 103683 / JCM 12257 / NCTC 11834 / 2561)).